The following is a 364-amino-acid chain: Zinc transporter 3 (364 aa).

Residues 1-23 form the signal peptide; that stretch reads MGAKKHTLQVLPWLLLFAQHTAA. The Extracellular portion of the chain corresponds to 24 to 44; sequence SACDCANTTDGADRQGAMKLK. Residue Asn30 is glycosylated (N-linked (GlcNAc...) asparagine). A helical transmembrane segment spans residues 45 to 65; that stretch reads LIAIASILAAGAAGVLVPVIG. Residues 66 to 76 are Cytoplasmic-facing; it reads RSMAALRPDGD. Residues 77–97 traverse the membrane as a helical segment; sequence IFFAVKAFAAGVILATGMVHI. Over 98-119 the chain is Extracellular; that stretch reads LPAAFDALTSPCLKRGGGDRNP. A helical transmembrane segment spans residues 120–140; the sequence is FPFAGLVSMSAAVSTMVVDSL. Over 141–213 the chain is Cytoplasmic; that stretch reads AAGYYHRSQF…ESIRHKVVSQ (73 aa). A helical transmembrane segment spans residues 214–234; the sequence is VLELGILVHSVIIGVSLGASV. The Extracellular segment spans residues 235–241; that stretch reads RPSTIRP. Residues 242 to 262 form a helical membrane-spanning segment; it reads LVGALSFHQFFEGVGLGGCIV. The Cytoplasmic portion of the chain corresponds to 263 to 271; it reads QANFKVRAT. A helical transmembrane segment spans residues 272–292; it reads VIMAIFFSLTAPVGIVLGIAI. Residues 293-303 are Extracellular-facing; it reads SSSYNVHSSTA. The chain crosses the membrane as a helical span at residues 304–324; it reads FVVEGVFNSASAGILIYMSLV. At 325–343 the chain is on the cytoplasmic side; sequence DLLATDFNNPKLQINTKLQ. Residues 344 to 364 form a helical membrane-spanning segment; sequence LMAYLALFLGAGLMSMLAIWA.

It belongs to the ZIP transporter (TC 2.A.5) family. In terms of tissue distribution, expressed in vascular bundles of stems.

Its subcellular location is the cell membrane. In terms of biological role, zinc transporter that may mediate zinc uptake from the rhizosphere. Seems specific to zinc ions and may not transport other divalent cations. The sequence is that of Zinc transporter 3 (ZIP3) from Oryza sativa subsp. japonica (Rice).